We begin with the raw amino-acid sequence, 451 residues long: Runt-related transcription factor 1 (451 aa).

Residues 1–37 (MRIPVDASTSRRFTPPSTALSPGKMSEALPLGAPDGG) are disordered. Positions 7 to 20 (ASTSRRFTPPSTAL) are enriched in polar residues. Position 14 is a phosphothreonine (Thr14). Phosphoserine is present on Ser21. N6-acetyllysine is present on residues Lys24 and Lys43. Residues 50 to 178 (SMVEVLADHP…TVDGPREPRR (129 aa)) enclose the Runt domain. Residues 80–84 (RCNKT) are interaction with DNA. Residues Asn112, Glu116, Arg139, and Val170 each contribute to the chloride site. Interaction with DNA stretches follow at residues 135-143 (RFVGRSGRG) and 168-177 (ITVDGPREPR). Disordered stretches follow at residues 170–195 (VDGP…LSFS) and 209–252 (MRVS…SPPW). Phosphoserine is present on residues Ser193 and Ser212. Residues 222–247 (PRASLNHSTAFNPQPQSQMQDARQIQ) are compositionally biased toward polar residues. Ser249 bears the Phosphoserine; by HIPK2 mark. Ser266 and Ser268 each carry phosphoserine. The disordered stretch occupies residues 268–290 (SVHPATPISPGRASGMTSLSAEL). Thr273 carries the post-translational modification Phosphothreonine; by HIPK2. Ser276 bears the Phosphoserine; by HIPK2 mark. Residues 291–370 (SSRLSTAPDL…SQAQAGPFQT (80 aa)) are interaction with KAT6A. Residue Thr296 is modified to Phosphothreonine. The interaction with KAT6B stretch occupies residues 307–399 (RQFPTLPSIS…MVGGERSPPR (93 aa)). The tract at residues 361–401 (SQAQAGPFQTGSPSYHLYYGASAGSYQFSMVGGERSPPRIL) is interaction with FOXP3. The interval 406-451 (NASTGAALLNPSLPSQSDVVETEGSHSNSPTNMPPARLEEAVWRPY) is disordered. Polar residues predominate over residues 417-436 (SLPSQSDVVETEGSHSNSPT). At Ser434 the chain carries Phosphoserine. Over residues 442–451 (RLEEAVWRPY) the composition is skewed to basic and acidic residues.

Heterodimer with CBFB. RUNX1 binds DNA as a monomer and through the Runt domain. DNA-binding is increased by heterodimerization. Interacts with TLE1 and ALYREF/THOC4. Interacts with HIPK2, ELF1, ELF2 and SPI1. Interacts via its Runt domain with the ELF4 N-terminal region. Interaction with ELF2 isoform 2 (NERF-1a) may act to repress RUNX1-mediated transactivation. Interacts with KAT6A and KAT6B. Interacts with SUV39H1, leading to abrogation of transactivating and DNA-binding properties of RUNX1. Interacts with YAP1. Interaction with CDK6 prevents myeloid differentiation, reducing its transcription transactivation activity. Found in a complex with PRMT5, RUNX1 and CBFB. Interacts with FOXP3. Interacts with TBX21. Interacts with DPF2. In terms of processing, phosphorylated in its C-terminus upon IL-6 treatment. Phosphorylation enhances interaction with KAT6A. Post-translationally, methylated. Phosphorylated in Ser-249 Thr-273 and Ser-276 by HIPK2 when associated with CBFB and DNA. This phosphorylation promotes subsequent EP300 phosphorylation. As to expression, isoform 4 is expressed at high levels in thymus, spleen and T-cell lines and at lower levels in myeloid cell lines and nonhematopoietic cells. Isoform 5 is expressed ubiquitously in lumbar vertebrae, brain, kidney, heart, muscle, ovary and osteoblast-like cell line MC3T3-E1.

It is found in the nucleus. In terms of biological role, forms the heterodimeric complex core-binding factor (CBF) with CBFB. RUNX members modulate the transcription of their target genes through recognizing the core consensus binding sequence 5'-TGTGGT-3', or very rarely, 5'-TGCGGT-3', within their regulatory regions via their runt domain, while CBFB is a non-DNA-binding regulatory subunit that allosterically enhances the sequence-specific DNA-binding capacity of RUNX. The heterodimers bind to the core site of a number of enhancers and promoters, including murine leukemia virus, polyomavirus enhancer, T-cell receptor enhancers, LCK, IL3 and GM-CSF promoters. Essential for the development of normal hematopoiesis. Acts synergistically with ELF4 to transactivate the IL-3 promoter and with ELF2 to transactivate the BLK promoter. Inhibits KAT6B-dependent transcriptional activation. Involved in lineage commitment of immature T cell precursors. CBF complexes repress ZBTB7B transcription factor during cytotoxic (CD8+) T cell development. They bind to RUNX-binding sequence within the ZBTB7B locus acting as transcriptional silencer and allowing for cytotoxic T cell differentiation. CBF complexes binding to the transcriptional silencer is essential for recruitment of nuclear protein complexes that catalyze epigenetic modifications to establish epigenetic ZBTB7B silencing. Controls the anergy and suppressive function of regulatory T-cells (Treg) by associating with FOXP3. Activates the expression of IL2 and IFNG and down-regulates the expression of TNFRSF18, IL2RA and CTLA4, in conventional T-cells. Positively regulates the expression of RORC in T-helper 17 cells. Isoform 4 shows higher binding activities for target genes and binds TCR-beta-E2 and RAG-1 target site with threefold higher affinity than other isoforms. It is less effective in the context of neutrophil terminal differentiation. The protein is Runt-related transcription factor 1 (Runx1) of Mus musculus (Mouse).